The sequence spans 424 residues: Serine/threonine-protein kinase H1 (424 aa).

G2 carries the N-myristoyl glycine lipid modification. Residue C3 is the site of S-palmitoyl cysteine attachment. Residues 49–81 (KGGFPAASQGANPSPGTPRTSHTEPPSEPPRRA) are disordered. The span at 57–72 (QGANPSPGTPRTSHTE) shows a compositional bias: polar residues. A Protein kinase domain is found at 98–355 (YDIKALIGRG…ALQALRHPWV (258 aa)). ATP is bound by residues 104–112 (IGRGSFSRV) and K127. The active-site Proton acceptor is D218. The tract at residues 378-407 (RASSRCQSTKSAQSTRSSRSTRSNKSRRVR) is disordered. Residues S380 and S381 each carry the phosphoserine; by autocatalysis modification. Residues 385 to 398 (STKSAQSTRSSRST) show a composition bias toward low complexity.

The protein belongs to the protein kinase superfamily. CAMK Ser/Thr protein kinase family. In terms of assembly, homodimer. Post-translationally, autophosphorylated on serine residues. In terms of processing, myristoylated. Required for membrane association. Prerequisite for palmitoylation to occur. Palmitoylated.

Its subcellular location is the golgi apparatus. It is found in the cytoplasm. It localises to the cytoskeleton. The protein resides in the microtubule organizing center. The protein localises to the centrosome. Its subcellular location is the nucleus speckle. It is found in the endoplasmic reticulum membrane. It localises to the cell membrane. It carries out the reaction L-seryl-[protein] + ATP = O-phospho-L-seryl-[protein] + ADP + H(+). The enzyme catalyses L-threonyl-[protein] + ATP = O-phospho-L-threonyl-[protein] + ADP + H(+). Activity depends on Ca(2+) concentration. Functionally, may be a SFC-associated serine kinase (splicing factor compartment-associated serine kinase) with a role in intranuclear SR protein (non-snRNP splicing factors containing a serine/arginine-rich domain) trafficking and pre-mRNA processing. The polypeptide is Serine/threonine-protein kinase H1 (PSKH1) (Bos taurus (Bovine)).